Reading from the N-terminus, the 307-residue chain is Protein rep (307 aa).

DNA is bound at residue tyrosine 219.

The protein belongs to the Gram-positive plasmids replication protein type 1 family.

The sequence is that of Protein rep (repA) from Bacillus sp.